Consider the following 216-residue polypeptide: Ribosomal RNA small subunit methyltransferase G (216 aa).

Residues Gly-83, Met-88, 134-135 (VE), and Arg-149 contribute to the S-adenosyl-L-methionine site.

The protein belongs to the methyltransferase superfamily. RNA methyltransferase RsmG family.

The protein resides in the cytoplasm. The enzyme catalyses guanosine(527) in 16S rRNA + S-adenosyl-L-methionine = N(7)-methylguanosine(527) in 16S rRNA + S-adenosyl-L-homocysteine. In terms of biological role, specifically methylates the N7 position of guanine in position 527 of 16S rRNA. This Pseudomonas putida (strain ATCC 700007 / DSM 6899 / JCM 31910 / BCRC 17059 / LMG 24140 / F1) protein is Ribosomal RNA small subunit methyltransferase G.